The following is a 473-amino-acid chain: Cysteine--tRNA ligase (473 aa).

Cys29 lines the Zn(2+) pocket. The 'HIGH' region motif lies at 31 to 41; the sequence is PTVYDRAHLGN. 3 residues coordinate Zn(2+): Cys225, His250, and Glu254. The short motif at 281-285 is the 'KMSKS' region element; that stretch reads KMSKS. Lys284 is an ATP binding site.

Belongs to the class-I aminoacyl-tRNA synthetase family. As to quaternary structure, monomer. Requires Zn(2+) as cofactor.

It localises to the cytoplasm. The enzyme catalyses tRNA(Cys) + L-cysteine + ATP = L-cysteinyl-tRNA(Cys) + AMP + diphosphate. This is Cysteine--tRNA ligase from Roseobacter denitrificans (strain ATCC 33942 / OCh 114) (Erythrobacter sp. (strain OCh 114)).